A 372-amino-acid chain; its full sequence is Anhydro-N-acetylmuramic acid kinase (372 aa).

12–19 (GTSMDALD) provides a ligand contact to ATP.

It belongs to the anhydro-N-acetylmuramic acid kinase family.

It catalyses the reaction 1,6-anhydro-N-acetyl-beta-muramate + ATP + H2O = N-acetyl-D-muramate 6-phosphate + ADP + H(+). It functions in the pathway amino-sugar metabolism; 1,6-anhydro-N-acetylmuramate degradation. The protein operates within cell wall biogenesis; peptidoglycan recycling. Catalyzes the specific phosphorylation of 1,6-anhydro-N-acetylmuramic acid (anhMurNAc) with the simultaneous cleavage of the 1,6-anhydro ring, generating MurNAc-6-P. Is required for the utilization of anhMurNAc either imported from the medium or derived from its own cell wall murein, and thus plays a role in cell wall recycling. In Coxiella burnetii (strain CbuK_Q154) (Coxiella burnetii (strain Q154)), this protein is Anhydro-N-acetylmuramic acid kinase.